Consider the following 641-residue polypeptide: Probable potassium transport system protein Kup 4 (641 aa).

Helical transmembrane passes span A31–L51, T64–I84, I119–P139, G155–A175, I183–L203, A221–L241, W265–I285, L298–A318, I355–F375, L381–F401, L412–A432, and I437–T457.

The protein belongs to the HAK/KUP transporter (TC 2.A.72) family.

The protein localises to the cell inner membrane. The enzyme catalyses K(+)(in) + H(+)(in) = K(+)(out) + H(+)(out). In terms of biological role, transport of potassium into the cell. Likely operates as a K(+):H(+) symporter. This chain is Probable potassium transport system protein Kup 4, found in Bradyrhizobium sp. (strain BTAi1 / ATCC BAA-1182).